Here is a 138-residue protein sequence, read N- to C-terminus: Prefoldin subunit alpha (138 aa).

It belongs to the prefoldin subunit alpha family. In terms of assembly, heterohexamer of two alpha and four beta subunits.

The protein localises to the cytoplasm. In terms of biological role, molecular chaperone capable of stabilizing a range of proteins. Seems to fulfill an ATP-independent, HSP70-like function in archaeal de novo protein folding. This chain is Prefoldin subunit alpha, found in Methanosphaera stadtmanae (strain ATCC 43021 / DSM 3091 / JCM 11832 / MCB-3).